The sequence spans 312 residues: E3 ubiquitin-protein ligase RNF126-B (312 aa).

Cys-13, Cys-16, Cys-29, and Cys-32 together coordinate Zn(2+). The segment at 13-32 (CHSCTAEITPRLPEYTCPRC) adopts a C4-type zinc-finger fold. 2 disordered regions span residues 41–63 (PETSRNSESNSSNNSGTDQNRPS) and 96–139 (GTSG…RNEG). The segment covering 44-55 (SRNSESNSSNNS) has biased composition (low complexity). Over residues 102–115 (EETRDGESRREHQS) the composition is skewed to basic and acidic residues. Basic residues predominate over residues 124-134 (PRARMSTRRGA). Residues 228 to 269 (CPVCKEDYTVGESVRQLPCNHLFHNDCIIPWLEQHDTCPVCR) form an RING-type zinc finger. Positions 275-312 (QNTATNPPGLTDMTFSSSSTSSSSSTSPTDENNTANNS) are disordered. A compositionally biased stretch (low complexity) spans 290–301 (SSSSTSSSSSTS). The segment covering 302–312 (PTDENNTANNS) has biased composition (polar residues).

The protein localises to the cytoplasm. The protein resides in the nucleus. It carries out the reaction S-ubiquitinyl-[E2 ubiquitin-conjugating enzyme]-L-cysteine + [acceptor protein]-L-lysine = [E2 ubiquitin-conjugating enzyme]-L-cysteine + N(6)-ubiquitinyl-[acceptor protein]-L-lysine.. It participates in protein modification; protein ubiquitination. In terms of biological role, E3 ubiquitin-protein ligase that mediates ubiquitination oF target proteins. Depending on the associated E2 ligase, mediates 'Lys-27'-, 'Lys-29'-, 'Lys-48'- and/or 'Lys-63'-linked polyubiquitination of substrates. Part of a BAG6-dependent quality control process ensuring that proteins of the secretory pathway that are mislocalized to the cytosol are degraded by the proteasome. Probably acts by providing the ubiquitin ligase activity associated with the BAG6 complex and be responsible for ubiquitination of the hydrophobic mislocalized proteins and their targeting to the proteasome. The sequence is that of E3 ubiquitin-protein ligase RNF126-B from Xenopus laevis (African clawed frog).